A 344-amino-acid chain; its full sequence is Peroxidase 36 (344 aa).

An N-terminal signal peptide occupies residues 1–28 (MNTKTVKSMAGIVLSQISLVALFPLCIC). Disulfide bonds link Cys50-Cys130, Cys83-Cys88, Cys136-Cys337, and Cys215-Cys247. His81 (proton acceptor) is an active-site residue. Ca(2+) contacts are provided by Asp82, Val85, Gly87, Asp89, and Ser91. Pro178 provides a ligand contact to substrate. His208 is a binding site for heme b. Thr209 is a Ca(2+) binding site. N-linked (GlcNAc...) asparagine glycosylation occurs at Asn224. Residues Asp260, Thr263, and Asp268 each contribute to the Ca(2+) site.

It belongs to the peroxidase family. Classical plant (class III) peroxidase subfamily. The cofactor is heme b. It depends on Ca(2+) as a cofactor.

The protein localises to the secreted. It catalyses the reaction 2 a phenolic donor + H2O2 = 2 a phenolic radical donor + 2 H2O. In terms of biological role, removal of H(2)O(2), oxidation of toxic reductants, biosynthesis and degradation of lignin, suberization, auxin catabolism, response to environmental stresses such as wounding, pathogen attack and oxidative stress. These functions might be dependent on each isozyme/isoform in each plant tissue. The protein is Peroxidase 36 (PER36) of Arabidopsis thaliana (Mouse-ear cress).